Consider the following 510-residue polypeptide: NAD(P)H-quinone oxidoreductase subunit 2, chloroplastic (510 aa).

A run of 12 helical transmembrane segments spans residues 24–44 (LLLFHGSFIFPECILIFGLIL), 59–79 (WFYFISSTSLVMSITALLFRW), 99–119 (IFQFLILLCSTLCIPLSVEYI), 124–144 (MAITEFLLFVLTATLGGMFLC), 149–169 (FITIFVAPECFSLCSYLLSGY), 183–203 (YLLMGGASSSILVHGFSWLYG), 229–249 (ISIALISITVGIGFKLSPAPF), 295–315 (WHLLLEILAILSMILGNLIAI), 323–343 (MLAYSSIGQIGYVIIGIIVGD), 347–367 (GYASMITYMLFYISMNLGTFA), 395–415 (ALSLALCLLSLGGLPPLAGFF), and 418–438 (LHLFWCGWQAGLYFLVSIGLL).

This sequence belongs to the complex I subunit 2 family. NDH is composed of at least 16 different subunits, 5 of which are encoded in the nucleus.

It localises to the plastid. The protein localises to the chloroplast thylakoid membrane. It catalyses the reaction a plastoquinone + NADH + (n+1) H(+)(in) = a plastoquinol + NAD(+) + n H(+)(out). The catalysed reaction is a plastoquinone + NADPH + (n+1) H(+)(in) = a plastoquinol + NADP(+) + n H(+)(out). NDH shuttles electrons from NAD(P)H:plastoquinone, via FMN and iron-sulfur (Fe-S) centers, to quinones in the photosynthetic chain and possibly in a chloroplast respiratory chain. The immediate electron acceptor for the enzyme in this species is believed to be plastoquinone. Couples the redox reaction to proton translocation, and thus conserves the redox energy in a proton gradient. The chain is NAD(P)H-quinone oxidoreductase subunit 2, chloroplastic from Phormium tenax (New Zealand flax).